A 551-amino-acid chain; its full sequence is E3 ubiquitin-protein ligase HEL1 (551 aa).

Positions 175–388 are TRIAD supradomain; sequence NDFTCIICCD…KNFFQCTMYK (214 aa). Cys-179, Cys-182, Cys-200, Cys-203, Cys-301, Cys-304, His-309, Cys-314, Cys-341, and Cys-344 together coordinate Zn(2+). An RING-type 1 zinc finger spans residues 179–225; the sequence is CIICCDKKDTETFALECGHEYCINCYRHYIKDKLHEGNIITCMDCSL. The IBR-type zinc finger occupies 242–314; the sequence is SKLMDSSIKS…GFEVHSPADC (73 aa). The segment at 341–370 adopts an RING-type 2; atypical zinc-finger fold; that stretch reads CPKCSVNIEKNGGCNHMVCSSCKYEFCWIC. Cys-354 is an active-site residue. Positions 359, 362, 367, 370, 377, and 384 each coordinate Zn(2+).

It belongs to the RBR family. Interacts with the E2 ubiquitin-conjugating enzyme UBC4 and histones H3 and H4.

It catalyses the reaction [E2 ubiquitin-conjugating enzyme]-S-ubiquitinyl-L-cysteine + [acceptor protein]-L-lysine = [E2 ubiquitin-conjugating enzyme]-L-cysteine + [acceptor protein]-N(6)-ubiquitinyl-L-lysine.. The protein operates within protein modification; protein ubiquitination. In terms of biological role, probable ubiquitin-protein ligase involved in the degradation-related ubiquitination of histones. Contributes to the post-translational regulation of histone protein levels by polyubiquitination of excess histones for subsequent degradation. This is E3 ubiquitin-protein ligase HEL1 from Saccharomyces cerevisiae (strain ATCC 204508 / S288c) (Baker's yeast).